A 286-amino-acid chain; its full sequence is MNINGYTRMAAVVANPIKHSLSPFIHNLAFDLTNENGVYLAWEVEAEKLPAIVDNVRTLDMYGLNISMPYKTEITPFMDELSPAAELIGAVNTVVNQSGKLIGHNTDGIGFFNSLEKYHFNIQNKQMLILGGGGAAIAIIAQAALSGAKKIVVAARKSASYIPLKEKLEKLSVKTGIEILLTDLSEADRLQKELKQTDLLVNATSVGMDGESLPLEKSLVLPEKLLVVDAIYKVRETPFLRWAKGQGAQTENGLGMLIGQAAESFYLWTGKKMPVAEITLEMEKEA.

Shikimate contacts are provided by residues 20 to 22 (SLS) and Ser-67. Residue Lys-71 is the Proton acceptor of the active site. Residues Asn-92 and Asp-107 each contribute to the shikimate site. Residues 131–135 (GGGGA) and Ala-230 contribute to the NADP(+) site. Residue Tyr-232 participates in shikimate binding. Position 253 (Gly-253) interacts with NADP(+).

This sequence belongs to the shikimate dehydrogenase family. As to quaternary structure, homodimer.

It catalyses the reaction shikimate + NADP(+) = 3-dehydroshikimate + NADPH + H(+). The protein operates within metabolic intermediate biosynthesis; chorismate biosynthesis; chorismate from D-erythrose 4-phosphate and phosphoenolpyruvate: step 4/7. Its function is as follows. Involved in the biosynthesis of the chorismate, which leads to the biosynthesis of aromatic amino acids. Catalyzes the reversible NADPH linked reduction of 3-dehydroshikimate (DHSA) to yield shikimate (SA). This is Shikimate dehydrogenase (NADP(+)) from Lactococcus lactis subsp. lactis (strain IL1403) (Streptococcus lactis).